Consider the following 764-residue polypeptide: Complement factor B (764 aa).

An N-terminal signal peptide occupies residues 1 to 25 (MGSNLSPQLCLMPFILGLLSGGVTT). Sushi domains follow at residues 35 to 100 (GSCS…ECRA), 101 to 160 (IHCP…ICDN), and 163 to 220 (GYCS…SCQD). 6 disulfides stabilise this stretch: Cys37–Cys76, Cys62–Cys98, Cys103–Cys145, Cys131–Cys158, Cys165–Cys205, and Cys191–Cys218. Residues Asn122 and Asn142 are each glycosylated (N-linked (GlcNAc...) asparagine). The VWFA domain maps to 270-469 (NIYLVLDGSD…NLEDVFFQMI (200 aa)). The Mg(2+) site is built by Ser278 and Ser280. The N-linked (GlcNAc...) asparagine glycan is linked to Asn285. A Mg(2+)-binding site is contributed by Thr353. An N-linked (GlcNAc...) asparagine glycan is attached at Asn378. Positions 477–757 (LCGMVWEHRK…VLPWLKQKLQ (281 aa)) constitute a Peptidase S1 domain. Disulfide bonds link Cys478–Cys596, Cys511–Cys527, Cys599–Cys615, Cys656–Cys682, and Cys695–Cys725. Catalysis depends on charge relay system residues His526 and Asp576. Ser699 serves as the catalytic Charge relay system.

This sequence belongs to the peptidase S1 family. As to quaternary structure, monomer. Interacts with complement C3b; this interaction is dependent on the presence of Mg(2+). Catalytic component of the C3 convertase of the alternative complement pathway, also named C3bBb, composed of complement factor B Bb and complement C3b. Catalytic component of the C5 convertase of the alternative complement pathway, also named C3bBb3b, composed of complement factor B Bb and additional molecules of complement C3b. Interacts to CFP; this interaction contributes to the stabilization of the active C3-convertase enzyme complex. The cofactor is Mg(2+). It depends on Mn(2+) as a cofactor. Post-translationally, cleaved by CFD following activation of the alternative complement system, generating Ba and Bb chains. Cleavage and activation takes place when CFB is already associated with complement C3b.

The protein resides in the secreted. The protein localises to the cell surface. The enzyme catalyses Cleavage of Arg-|-Ser bond in complement component C3 alpha-chain to yield C3a and C3b, and Arg-|-Xaa bond in complement component C5 alpha-chain to yield C5a and C5b.. In terms of biological role, precursor of the catalytic component of the C3 and C5 convertase complexes of the alternative pathway of the complement system, a cascade of proteins that leads to phagocytosis and breakdown of pathogens and signaling that strengthens the adaptive immune system. The alternative complement pathway acts as an amplification loop that enhances other complement pathways (classical, lectin and GZMK) by promoting formation of additional C3 and C5 convertases. CFB is cleaved and activated by CFD to generate Ba and Bb chains; Bb chain constituting the catalytic component of the C3 and C5 convertases. Its function is as follows. Serine protease component of the complement C3 and C5 convertase complexes of the alternative complement pathway. Following cleavage and activation by factor D (CFD), forms the C3 convertase together with complement C3b. As part of the C3 convertase, cleaves and activates C3 into C3a anaphylatoxin and C3b opsonin, the next components of the complement pathways. When an additional complement C3b molecule binds to the C3 convertase, forms the C5 convertase, which cleaves and activates C5 into C5a anaphylatoxin and C5b component of the membrane attack complex. Involved in proliferation and differentiation of preactivated B-lymphocytes, rapid spreading of peripheral blood monocytes, stimulation of lymphocyte blastogenesis and lysis of erythrocytes. The protein is Complement factor B (CFB) of Pongo pygmaeus (Bornean orangutan).